The sequence spans 828 residues: MQDRNLIDVNLTSEMKTSFIDYAMSVIVARALPDVRDGLKPVHRRILYGMNELGVTPDKPHKKSARITGDVMGKYHPHGDSSIYEAMVRMAQWWSYRHMLVDGHGNFGSMDGDGAAAQRYTEARMSKIALELLRDINKNTVNFQDNYDGSEREPVVLPARFPNLLVNGATGIAVGMATNIPPHNLAESIDAVKMVMEHPDCTTRELMEVIPGPDFPTGALVMGRSGIHRAYDTGKGSIVLRSRTEIETTQTGRERIVVTEFPYGVNKTKVHEHIVRLAQEKRLEGITAVRDESSREGVRFVIEIRREASATVILNNLFKLTSLQTNFSFNMLAIENGVPKILSLRQIIDNYISHQKEVIIRRTRFDKDKAEARAHILEGLLIALDHLDEVIAIIRNSETDVIAQTELMSRFDLSERQSQAILDMRLRRLTGLERDKIQSEYDDLLALIADLSDILAKPERIITIIKEEMDEIKRKYANPRRTELMVGEVLSLEDEDLIEEEDVLITLSNKGYIKRLAQDEFRAQKRGGRGVQGTGVNNDDFVRELISTSTHDTLLFFTNFGRVYRLKAYEIPEYGRTAKGLPIVNLLKLEDGETIQTIINARKEETAGKSFFFTTKQGIVKRTEVSEFNNIRQNGLRALKLKEGDQLINVLLTSGQDDIIIGTHSGYSVRFNEASIRNMGRSATGVRGVKLREDDRVVGASRIQDNQEVLVITENGFGKRTSATDYPTKGRGGKGIKTANITPKNGQLAGLVTVDGTEDIMVITNKGVIIRTNVANISQTGRATLGVKIMKLDADAKIVTFTLVQPEDSSIAEINTDRENSISKNKDN.

The Topo IIA-type catalytic domain maps to 32-497 (LPDVRDGLKP…EVLSLEDEDL (466 aa)). Catalysis depends on tyrosine 120, which acts as the O-(5'-phospho-DNA)-tyrosine intermediate. The GyrA-box motif lies at 524 to 530 (QKRGGRG).

This sequence belongs to the type II topoisomerase GyrA/ParC subunit family. In terms of assembly, heterotetramer, composed of two GyrA and two GyrB chains. In the heterotetramer, GyrA contains the active site tyrosine that forms a transient covalent intermediate with DNA, while GyrB binds cofactors and catalyzes ATP hydrolysis.

It localises to the cytoplasm. The catalysed reaction is ATP-dependent breakage, passage and rejoining of double-stranded DNA.. Functionally, a type II topoisomerase that negatively supercoils closed circular double-stranded (ds) DNA in an ATP-dependent manner to modulate DNA topology and maintain chromosomes in an underwound state. Negative supercoiling favors strand separation, and DNA replication, transcription, recombination and repair, all of which involve strand separation. Also able to catalyze the interconversion of other topological isomers of dsDNA rings, including catenanes and knotted rings. Type II topoisomerases break and join 2 DNA strands simultaneously in an ATP-dependent manner. The protein is DNA gyrase subunit A of Streptococcus pyogenes serotype M1.